The following is a 727-amino-acid chain: Cyclin-T1 (727 aa).

S117 bears the Phosphoserine mark. The short motif at K253–D270 is the Nuclear localization signal element. K343 participates in a covalent cross-link: Glycyl lysine isopeptide (Lys-Gly) (interchain with G-Cter in SUMO2). S389 carries the phosphoserine modification. The stretch at S389–A420 forms a coiled coil. K391 carries the N6-acetyllysine modification. K416 participates in a covalent cross-link: Glycyl lysine isopeptide (Lys-Gly) (interchain with G-Cter in SUMO2). 2 positions are modified to ADP-ribosylserine: S417 and S475. Residues I481 to Q551 form a histidine-rich domain (HRD) region. K482 is covalently cross-linked (Glycyl lysine isopeptide (Lys-Gly) (interchain with G-Cter in SUMO2)). K486 bears the N6-(ADP-ribosyl)lysine mark. Over residues V487–H507 the composition is skewed to basic and acidic residues. Disordered regions lie at residues V487–C631 and Y691–K727. Position 488 is an ADP-ribosylhistidine (H488). Residues S496 and S500 each carry the phosphoserine modification. A compositionally biased stretch (basic residues) spans K508–H531. ADP-ribosylhistidine is present on H531. 3 positions are modified to ADP-ribosylserine: S532, S550, and S553. H557 bears the ADP-ribosylhistidine mark. The segment covering S561–S571 has biased composition (low complexity). An ADP-ribosylserine modification is found at S564. S565 carries the phosphoserine modification. Over residues G616–C631 the composition is skewed to polar residues. Residues P711–K727 are compositionally biased toward pro residues.

This sequence belongs to the cyclin family. Cyclin C subfamily. Cyclin-T1 is the predominant cyclin that associates with CDK9 to form a heterodimer called P-TEFb. P-TEFb forms a complex with AFF4/AF5Q31. Component of a complex which is at least composed of HTATSF1/Tat-SF1, P-TEFb complex, RNA pol II, SUPT5H, and NCL/nucleolin. Component of the 7SK snRNP complex at least composed of P-TEFb (composed of CDK9 and CCNT1/cyclin-T1), HEXIM1, HEXIM2, BCDIN3, SART3 proteins and 7SK and U6 snRNAs. Interacts (via central region) with ZMYND8 (via N-terminus); the interaction is direct and the association appears to occur between homodimeric ZMYND8 and the activated form of the P-TEFb complex. Interacts with BRD4, targets chromatin binding. Interacts with JMJD6. Interacts with MDFIC. Interacts with HSF1. Interacts with HTATSF1. Interacts with TBX21. As to quaternary structure, (Microbial infection) Binds to BIV Tat, however Tat binds TAR RNA in a Cyc-T1-independent mode. In terms of processing, ADP-ribosylation on serine residues by PARP1 in response to DNA damage disrupts the phase separation activity of CCNT1, thereby preventing activation of CDK9.

The protein resides in the nucleus. Its function is as follows. Regulatory subunit of the cyclin-dependent kinase pair (CDK9/cyclin-T1) complex, also called positive transcription elongation factor B (P-TEFb), which facilitates the transition from abortive to productive elongation by phosphorylating the CTD (C-terminal domain) of the large subunit of RNA polymerase II (RNA Pol II). Required to activate the protein kinase activity of CDK9: acts by mediating formation of liquid-liquid phase separation (LLPS) that enhances binding of P-TEFb to the CTD of RNA Pol II. The protein is Cyclin-T1 (CCNT1) of Bos taurus (Bovine).